The following is a 337-amino-acid chain: GTP 3',8-cyclase (337 aa).

Residues 18 to 242 (NFGRRFHYLR…DKADILDGPA (225 aa)) form the Radical SAM core domain. Arg27 provides a ligand contact to GTP. Residues Cys34 and Cys38 each contribute to the [4Fe-4S] cluster site. Tyr40 lines the S-adenosyl-L-methionine pocket. Residue Cys41 participates in [4Fe-4S] cluster binding. Position 76 (Arg76) interacts with GTP. Gly80 provides a ligand contact to S-adenosyl-L-methionine. Thr107 contacts GTP. Position 131 (Ser131) interacts with S-adenosyl-L-methionine. A GTP-binding site is contributed by Lys168. Met202 provides a ligand contact to S-adenosyl-L-methionine. Residues Cys265 and Cys268 each coordinate [4Fe-4S] cluster. GTP is bound at residue 270–272 (RLR). [4Fe-4S] cluster is bound at residue Cys282.

It belongs to the radical SAM superfamily. MoaA family. Monomer and homodimer. It depends on [4Fe-4S] cluster as a cofactor.

It catalyses the reaction GTP + AH2 + S-adenosyl-L-methionine = (8S)-3',8-cyclo-7,8-dihydroguanosine 5'-triphosphate + 5'-deoxyadenosine + L-methionine + A + H(+). It participates in cofactor biosynthesis; molybdopterin biosynthesis. In terms of biological role, catalyzes the cyclization of GTP to (8S)-3',8-cyclo-7,8-dihydroguanosine 5'-triphosphate. The protein is GTP 3',8-cyclase of Shewanella denitrificans (strain OS217 / ATCC BAA-1090 / DSM 15013).